The primary structure comprises 129 residues: Small ribosomal subunit protein uS11 (129 aa).

It belongs to the universal ribosomal protein uS11 family. Part of the 30S ribosomal subunit. Interacts with proteins S7 and S18. Binds to IF-3.

Its function is as follows. Located on the platform of the 30S subunit, it bridges several disparate RNA helices of the 16S rRNA. Forms part of the Shine-Dalgarno cleft in the 70S ribosome. The chain is Small ribosomal subunit protein uS11 from Erwinia tasmaniensis (strain DSM 17950 / CFBP 7177 / CIP 109463 / NCPPB 4357 / Et1/99).